The chain runs to 241 residues: Small ribosomal subunit protein uS3 (241 aa).

A KH type-2 domain is found at 39-108 (IREGVLKLLK…NLKVEVKVIE (70 aa)). Positions 215-241 (SQRVSEKAPMNNDRRFNNKNNNRGGRK) are disordered. A compositionally biased stretch (low complexity) spans 232-241 (NKNNNRGGRK).

It belongs to the universal ribosomal protein uS3 family. As to quaternary structure, part of the 30S ribosomal subunit. Forms a tight complex with proteins S10 and S14.

Binds the lower part of the 30S subunit head. Binds mRNA in the 70S ribosome, positioning it for translation. The protein is Small ribosomal subunit protein uS3 of Mesoplasma florum (strain ATCC 33453 / NBRC 100688 / NCTC 11704 / L1) (Acholeplasma florum).